Consider the following 580-residue polypeptide: Phosphatase and actin regulator 1 (580 aa).

Phosphoserine is present on residues S67 and S78. Phosphothreonine is present on T104. Positions 108–129 match the Nuclear localization signal motif; it reads RRRSKFANLGRIFKPWKWRKKK. An RPEL 1 repeat occupies 138 to 163; the sequence is AALERKISMRQSREELIKRGVLKEIY. Disordered regions lie at residues 330 to 350 and 374 to 408; these read SEQR…SSDG and DNKE…DDAS. The span at 337 to 348 shows a compositional bias: low complexity; it reads STSYHSSGLHSS. Residues 374–383 show a composition bias toward basic and acidic residues; that stretch reads DNKENVPHEP. The segment covering 395–407 has biased composition (acidic residues); it reads EEEEEEEDEDDDA. 3 RPEL repeats span residues 422 to 447, 460 to 485, and 498 to 523; these read DSLA…PRQT, TKLT…KPRN, and RRLT…IRFS. The tract at residues 463–494 is disordered; it reads TRRLSQRPTAEELEQRNILKPRNEQEEQEEKR. S467 carries the phosphoserine modification. The span at 471–494 shows a compositional bias: basic and acidic residues; the sequence is TAEELEQRNILKPRNEQEEQEEKR. Position 505 is a phosphoserine (S505).

The protein belongs to the phosphatase and actin regulator family. In terms of assembly, interacts (via RPEL repeats) with ACTA1 and PPP1CA; ACTA1 and PPP1CA compete for the same binding site.

The protein localises to the cytoplasm. Its subcellular location is the synapse. It localises to the nucleus. Binds actin monomers (G actin) and plays a role in multiple processes including the regulation of actin cytoskeleton dynamics, actin stress fibers formation, cell motility and survival, formation of tubules by endothelial cells, and regulation of PPP1CA activity. Involved in the regulation of cortical neuron migration and dendrite arborization. This Mus musculus (Mouse) protein is Phosphatase and actin regulator 1 (Phactr1).